A 147-amino-acid polypeptide reads, in one-letter code: UPF0306 protein YhbP (147 aa).

This sequence belongs to the UPF0306 family.

The protein is UPF0306 protein YhbP of Shigella boydii serotype 4 (strain Sb227).